We begin with the raw amino-acid sequence, 308 residues long: 2-methylisocitrate lyase (308 aa).

54–56 (SGG) contacts substrate. Positions 94 and 96 each coordinate Mg(2+). Substrate contacts are provided by residues 131–132 (CG), Arg-166, Glu-196, 224–226 (NIT), Arg-255, and Arg-284.

The protein belongs to the isocitrate lyase/PEP mutase superfamily. Methylisocitrate lyase family. In terms of assembly, homotetramer; dimer of dimers. It depends on Mg(2+) as a cofactor.

The enzyme catalyses (2S,3R)-3-hydroxybutane-1,2,3-tricarboxylate = pyruvate + succinate. The protein operates within organic acid metabolism; propanoate degradation. Functionally, involved in the catabolism of short chain fatty acids (SCFA) via the 2-methylcitrate cycle I (propionate degradation route). Catalyzes the thermodynamically favored C-C bond cleavage reaction of (2R,3S)-2-methylisocitrate to yield pyruvate and succinate via an alpha-carboxy-carbanion intermediate. This chain is 2-methylisocitrate lyase, found in Vibrio cholerae serotype O1 (strain ATCC 39315 / El Tor Inaba N16961).